Consider the following 442-residue polypeptide: Proline--tRNA ligase (442 aa).

This sequence belongs to the class-II aminoacyl-tRNA synthetase family. ProS type 2 subfamily. Homodimer.

It is found in the cytoplasm. The enzyme catalyses tRNA(Pro) + L-proline + ATP = L-prolyl-tRNA(Pro) + AMP + diphosphate. Its function is as follows. Catalyzes the attachment of proline to tRNA(Pro) in a two-step reaction: proline is first activated by ATP to form Pro-AMP and then transferred to the acceptor end of tRNA(Pro). This Chelativorans sp. (strain BNC1) protein is Proline--tRNA ligase.